Here is a 157-residue protein sequence, read N- to C-terminus: MNRFIIADATKCIGCRTCEVACAVSHHENQDCAALSPDEFISRIRVIKDHCWTTAVACHQCEDAPCANVCPVDAISREHGHIFVEQTRCIGCKSCMLACPFGAMEVVSSRKKARAIKCDLCWHRETGPACVEACPTKALQCMDVEKVQRHRLRQQPV.

4Fe-4S ferredoxin-type domains follow at residues 2 to 32 (NRFIIADATKCIGCRTCEVACAVSHHENQDC), 48 to 80 (KDHCWTTAVACHQCEDAPCANVCPVDAISREHG), 80 to 109 (GHIFVEQTRCIGCKSCMLACPFGAMEVVSS), and 112 to 144 (KARAIKCDLCWHRETGPACVEACPTKALQCMDV). Residues C12, C15, C18, C22, C58, C61, C66, C70, C89, C92, C95, C99, C118, C121, C130, and C134 each contribute to the [4Fe-4S] cluster site.

The chain is Putative electron transport protein YsaA (ysaA) from Escherichia coli (strain K12).